The chain runs to 428 residues: 3-phosphoshikimate 1-carboxyvinyltransferase (428 aa).

Residues lysine 23, serine 24, and arginine 28 each coordinate 3-phosphoshikimate. Lysine 23 contacts phosphoenolpyruvate. Phosphoenolpyruvate contacts are provided by glycine 97 and arginine 125. 3-phosphoshikimate is bound by residues serine 170, serine 171, glutamine 172, serine 198, aspartate 314, asparagine 338, and lysine 342. Glutamine 172 contributes to the phosphoenolpyruvate binding site. Residue aspartate 314 is the Proton acceptor of the active site. Phosphoenolpyruvate-binding residues include arginine 346, arginine 388, and lysine 413.

This sequence belongs to the EPSP synthase family. As to quaternary structure, monomer.

It is found in the cytoplasm. It catalyses the reaction 3-phosphoshikimate + phosphoenolpyruvate = 5-O-(1-carboxyvinyl)-3-phosphoshikimate + phosphate. Its pathway is metabolic intermediate biosynthesis; chorismate biosynthesis; chorismate from D-erythrose 4-phosphate and phosphoenolpyruvate: step 6/7. In terms of biological role, catalyzes the transfer of the enolpyruvyl moiety of phosphoenolpyruvate (PEP) to the 5-hydroxyl of shikimate-3-phosphate (S3P) to produce enolpyruvyl shikimate-3-phosphate and inorganic phosphate. The polypeptide is 3-phosphoshikimate 1-carboxyvinyltransferase (Baumannia cicadellinicola subsp. Homalodisca coagulata).